We begin with the raw amino-acid sequence, 517 residues long: Recombining binding protein suppressor of hairless-like protein (517 aa).

Basic and acidic residues predominate over residues 26-37 (EMQLQSEADRRS). Residues 26–48 (EMQLQSEADRRSLPGTWTRSSPE) form a disordered region. DNA-binding stretches follow at residues 78–88 (QKSYGNEKRFF), 193–198 (SKPSQK), and 220–225 (RLRSQT). Positions 387 to 512 (LISTLELSGG…HQEFTRTNFH (126 aa)) constitute an IPT/TIG domain.

It belongs to the Su(H) family. As to quaternary structure, interacts weakly with EBNA2. Does not interact with any Notch proteins.

The protein resides in the nucleus. In terms of biological role, putative transcription factor, which cooperates with EBNA2 to activate transcription. This chain is Recombining binding protein suppressor of hairless-like protein (RBPJL), found in Homo sapiens (Human).